A 243-amino-acid polypeptide reads, in one-letter code: Probable transcriptional regulatory protein BDU_30 (243 aa).

Belongs to the TACO1 family.

It is found in the cytoplasm. This Borrelia duttonii (strain Ly) protein is Probable transcriptional regulatory protein BDU_30.